The chain runs to 925 residues: Protein translocase subunit SecA (925 aa).

ATP contacts are provided by residues Gln87, 105–109 (GEGKT), and Asp515. 4 residues coordinate Zn(2+): Cys909, Cys911, Cys920, and His921.

The protein belongs to the SecA family. Monomer and homodimer. Part of the essential Sec protein translocation apparatus which comprises SecA, SecYEG and auxiliary proteins SecDF-YajC and YidC. Requires Zn(2+) as cofactor.

Its subcellular location is the cell inner membrane. The protein localises to the cytoplasm. The catalysed reaction is ATP + H2O + cellular proteinSide 1 = ADP + phosphate + cellular proteinSide 2.. In terms of biological role, part of the Sec protein translocase complex. Interacts with the SecYEG preprotein conducting channel. Has a central role in coupling the hydrolysis of ATP to the transfer of proteins into and across the cell membrane, serving both as a receptor for the preprotein-SecB complex and as an ATP-driven molecular motor driving the stepwise translocation of polypeptide chains across the membrane. The sequence is that of Protein translocase subunit SecA from Cupriavidus necator (strain ATCC 17699 / DSM 428 / KCTC 22496 / NCIMB 10442 / H16 / Stanier 337) (Ralstonia eutropha).